Here is a 206-residue protein sequence, read N- to C-terminus: Large ribosomal subunit protein mL40 (206 aa).

A mitochondrion-targeting transit peptide spans 1–46 (MATAAMLCAARALRPRSWIPGTCQAQVRHTHQRASLLSFWELIPMR). Positions 170–190 (PFEKEGPHYTPPVPNYQAPEG) are disordered.

This sequence belongs to the mitochondrion-specific ribosomal protein mL40 family. As to quaternary structure, component of the mitochondrial ribosome large subunit (39S) which comprises a 16S rRNA and about 50 distinct proteins.

The protein localises to the mitochondrion. In Rattus norvegicus (Rat), this protein is Large ribosomal subunit protein mL40 (Mrpl40).